Here is a 556-residue protein sequence, read N- to C-terminus: Threonylcarbamoyladenosine tRNA methylthiotransferase (556 aa).

A disordered region spans residues 17 to 57; it reads SATDPKPHDRQSARKNIVPRARKRNKNNIQEEEPPADSTIP. The 109-residue stretch at 60–168 folds into the MTTase N-terminal domain; it reads QKIWIRTWGC…VVEVVEETIK (109 aa). [4Fe-4S] cluster contacts are provided by C69, C105, C134, C210, C214, and C217. A Radical SAM core domain is found at 196-427; it reads RKNPLIEIIS…QLFHSYDPYD (232 aa). Positions 427–489 constitute a TRAM domain; the sequence is DHKIGQKQQV…KHFMKGQPVQ (63 aa). Residues 536–556 form a helical membrane-spanning segment; the sequence is VFLFLTALLAAVIAFVGTKLV.

The protein belongs to the methylthiotransferase family. CDKAL1 subfamily. Requires [4Fe-4S] cluster as cofactor.

It localises to the endoplasmic reticulum membrane. The enzyme catalyses N(6)-L-threonylcarbamoyladenosine(37) in tRNA + (sulfur carrier)-SH + AH2 + 2 S-adenosyl-L-methionine = 2-methylsulfanyl-N(6)-L-threonylcarbamoyladenosine(37) in tRNA + (sulfur carrier)-H + 5'-deoxyadenosine + L-methionine + A + S-adenosyl-L-homocysteine + 2 H(+). In terms of biological role, catalyzes the methylthiolation of N6-threonylcarbamoyladenosine (t(6)A), leading to the formation of 2-methylthio-N6-threonylcarbamoyladenosine (ms(2)t(6)A) at position 37 in tRNAs that read codons beginning with adenine. This chain is Threonylcarbamoyladenosine tRNA methylthiotransferase (cdkal1), found in Xenopus laevis (African clawed frog).